Here is a 1431-residue protein sequence, read N- to C-terminus: DNA polymerase II large subunit (1431 aa).

Residues 1388-1431 (LLENFANGYNKGKKEEMPKKQRKKEQEKSKKRKVISLDDFFSRK) are disordered. Residues 1399–1415 (GKKEEMPKKQRKKEQEK) show a composition bias toward basic and acidic residues.

The protein belongs to the archaeal DNA polymerase II family. Heterodimer of a large subunit and a small subunit. Post-translationally, this protein undergoes a protein self splicing that involves a post-translational excision of the intervening region (intein) followed by peptide ligation.

It catalyses the reaction DNA(n) + a 2'-deoxyribonucleoside 5'-triphosphate = DNA(n+1) + diphosphate. The catalysed reaction is Exonucleolytic cleavage in the 3'- to 5'-direction to yield nucleoside 5'-phosphates.. In terms of biological role, possesses two activities: a DNA synthesis (polymerase) and an exonucleolytic activity that degrades single-stranded DNA in the 3'- to 5'-direction. Has a template-primer preference which is characteristic of a replicative DNA polymerase. This chain is DNA polymerase II large subunit (polC), found in Pyrococcus horikoshii (strain ATCC 700860 / DSM 12428 / JCM 9974 / NBRC 100139 / OT-3).